The chain runs to 185 residues: Transposon Tn3 resolvase (185 aa).

The 136-residue stretch at 2–137 folds into the Resolvase/invertase-type recombinase catalytic domain; sequence RIFGYARVST…EGRQEAKLKG (136 aa). The O-(5'-phospho-DNA)-serine intermediate role is filled by Ser-10. Residues 161 to 180 constitute a DNA-binding region (H-T-H motif); sequence ATEIAHQLSIARSTVYKILE.

The protein belongs to the site-specific recombinase resolvase family.

In terms of biological role, resolvase catalyzes the resolution (a site-specific recombination) of the cointegrated replicon to yield the final transposition products. The sequence is that of Transposon Tn3 resolvase (tnpR) from Escherichia coli.